The primary structure comprises 333 residues: Dipeptide transport system permease protein DppB (333 aa).

Helical transmembrane passes span 9–29 (ILMV…LVHF), 103–123 (AFFA…IAAV), 136–156 (ASLT…ILYV), 197–217 (AVKS…AIIT), 256–276 (LIPV…GAVL), and 306–326 (VLII…LYGV). Residues 96–328 (FPATAELAFF…TVDLLYGVVN (233 aa)) form the ABC transmembrane type-1 domain.

The protein belongs to the binding-protein-dependent transport system permease family. OppBC subfamily.

It localises to the cell inner membrane. Part of the ABC transporter DppBCDF involved in dipeptide transport. Responsible for the translocation of the substrate across the membrane. This chain is Dipeptide transport system permease protein DppB (dppB), found in Haemophilus influenzae (strain ATCC 51907 / DSM 11121 / KW20 / Rd).